A 161-amino-acid polypeptide reads, in one-letter code: Small ribosomal subunit protein uS19 (161 aa).

Positions 1-19 (MARQKKYSGKGGARKKNKQ) are enriched in basic residues. The tract at residues 1–26 (MARQKKYSGKGGARKKNKQKQNVAPR) is disordered.

It belongs to the universal ribosomal protein uS19 family.

Functionally, protein S19 forms a complex with S13 that binds strongly to the 16S ribosomal RNA. The sequence is that of Small ribosomal subunit protein uS19 from Methanococcus maripaludis (strain C5 / ATCC BAA-1333).